A 530-amino-acid polypeptide reads, in one-letter code: MKIFGLVIMSLLFVSLPITQQPEARDVPAYDRSEVTISPAETPESPPATPKTPVEKKHAEEINKYIWGLNYDKNSILVYQGEAVTNVPPKKGYKDGSEYIVVEKKKKGINQNNADISVINAISSLTYPGALVKANRELVENQPNVLPVKRDSLTLSVDLPGMTKKDNKIFVKNPTKSNVNNAVNTLVERWNDKYSKAYPNINAKIDYSDEMAYSESQLIAKFGTAFKAVNNSLNVNFEAISDGKVQEEVISFKQIYYNINVNEPTSPSKFFGGSVTKEQLDALGVNAENPPAYISSVAYGRQVYVKLSSSSHSNKVKTAFEAAMSGKSVKGDVELTNIIKNSSFKAVIYGGSAKEEVEIIDGNLGELRDILKKGSTYDRENPGVPISYTTNFLKDNDLAVVKNNSEYIETTSKSYTDGKINIDHSGGYVAQFNISWDEVSYDENGNEIKVHKKWGENYKSKLAHFTSSIYLPGNARNINIYARECTGLFWEWWRTVIDDRNLPLVKNRNVSIWGTTLYPRHSNNVDNPIQ.

The signal sequence occupies residues 1-25 (MKIFGLVIMSLLFVSLPITQQPEAR). The tract at residues 36 to 55 (TISPAETPESPPATPKTPVE) is disordered. 4 beta stranded membrane passes run 215 to 228 (ESQLIAKFGTAFKA), 235 to 244 (VNFEAISDGK), 313 to 322 (SNKVKTAFEA), and 330 to 342 (KGDVELTNIIKNS). The short motif at 484-494 (ECTGLFWEWWR) is the Conserved undecapeptide element. A Cholesterol binding motif is present at residues 516–517 (TL).

It belongs to the cholesterol-dependent cytolysin family. As to quaternary structure, homooligomeric pore complex of 35 to 50 subunits; when inserted in the host membrane.

The protein localises to the secreted. It localises to the host cell membrane. Its function is as follows. A cholesterol-dependent toxin that causes cytolysis by forming pores in cholesterol containing host membranes. L.seeligeri is non-pathogenic, perhaps in part because this protein is about 25% as toxic as listeriolysin O. Mutating a single residue in the undecapeptide increases toxicity 2-fold. After binding to target membranes, the protein undergoes a major conformation change, leading to its insertion in the host membrane and formation of an oligomeric pore complex. Cholesterol is required for binding to host membranes, membrane insertion and pore formation; cholesterol binding is mediated by a Thr-Leu pair in the C-terminus. Can be reversibly inactivated by oxidation. The protein is Seeligeriolysin of Listeria seeligeri.